The following is a 318-amino-acid chain: Ornithine carbamoyltransferase (318 aa).

Carbamoyl phosphate contacts are provided by residues 63–66 (STRT), Gln-90, Arg-114, and 141–144 (HPCQ). L-ornithine-binding positions include Asn-172, Asp-235, and 239 to 240 (SM). Residues 275-276 (CL) and Arg-303 each bind carbamoyl phosphate.

The protein belongs to the aspartate/ornithine carbamoyltransferase superfamily. OTCase family.

Its subcellular location is the cytoplasm. It carries out the reaction carbamoyl phosphate + L-ornithine = L-citrulline + phosphate + H(+). It functions in the pathway amino-acid biosynthesis; L-arginine biosynthesis; L-arginine from L-ornithine and carbamoyl phosphate: step 1/3. Reversibly catalyzes the transfer of the carbamoyl group from carbamoyl phosphate (CP) to the N(epsilon) atom of ornithine (ORN) to produce L-citrulline. The protein is Ornithine carbamoyltransferase of Parasynechococcus marenigrum (strain WH8102).